The following is a 454-amino-acid chain: MAAGAGAGGGGGEGDSNGGGTSPGGVSAAAPAIGPHHLGVAAAEEAMWQMTLGGGESMESTPYPERIGEPDCSYYMRTGLCRFGMTCKFNHPPNRKLAVAAARMNGEYPYRVGQPECQYYLKTGTCKFGATCKFHHPREKAALANRVQLNVLGYPMRPNEKECAYYLRTGQCKFASTCKFHHPQPSNTMVAVRNSMYSPGQSATSPGQHTYPGAVTNWTLSRSASFIASPRWPGHSGYAQVIVPQGLVQVPGWNPYAAQMGSSSPDDQQRTPVTTQYYGSRQSETGGMGDHGMYQSYQGGSVPVGVYTVQGENIFPERPDQPECQFYMKTGDCKFGAVCKFHHPKERLVPAPNCALNSLGLPLRPGEPVCTFYSRYGICKFGPNCKFDHPMGTLMYGSATSPRGDVSSMHYQLSPSPGHPGILLDGGSGRSHRVPQSDSQQIPSGDGNAEREAS.

A compositionally biased stretch (gly residues) spans 1–23 (MAAGAGAGGGGGEGDSNGGGTSP). The tract at residues 1–30 (MAAGAGAGGGGGEGDSNGGGTSPGGVSAAA) is disordered. 5 C3H1-type zinc fingers span residues 66-94 (RIGE…HPPN), 111-139 (RVGQ…HPRE), 157-185 (RPNE…HPQP), 318-346 (RPDQ…HPKE), and 364-392 (RPGE…HPMG). The disordered stretch occupies residues 405–454 (DVSSMHYQLSPSPGHPGILLDGGSGRSHRVPQSDSQQIPSGDGNAEREAS). The span at 434–443 (VPQSDSQQIP) shows a compositional bias: polar residues.

This chain is Zinc finger CCCH domain-containing protein 66, found in Oryza sativa subsp. japonica (Rice).